Reading from the N-terminus, the 164-residue chain is Dynein regulatory complex protein 8 (164 aa).

EF-hand domains follow at residues 16-51 and 94-129; these read ELHK…LGCC and AAED…EGEP.

Belongs to the DRC8 family. Component of the nexin-dynein regulatory complex (N-DRC).

It localises to the cytoplasm. It is found in the cytoskeleton. The protein localises to the flagellum axoneme. In terms of biological role, component of the nexin-dynein regulatory complex (N-DRC), a key regulator of ciliary/flagellar motility which maintains the alignment and integrity of the distal axoneme and regulates microtubule sliding in motile axonemes. This chain is Dynein regulatory complex protein 8 (Efcab2), found in Mus musculus (Mouse).